Reading from the N-terminus, the 509-residue chain is MIKRALISVFYKDGILDFAKFLTSKNVEIVSTGGTYKYLKENNIPVIEVSEVTGAKEMLDGRVKTLDPKIHGAILAIRDNPTHMETIKERGITPIDMVIVNLYPFFEKVQDDNLKFEEKIEFIDIGGPTMLRSAAKSFKDVVVISDVKDYDLVKSEMEKGEVSFETKKYLASKVFNLTSAYDAAVSEFMFNSLESKEDKKLNYLNMSYALQEELRYGENPHQGASYYVSTTDKGSMKDFEQLNGKELSFNNIRDMDIALKIVLEFDESKKEYACSAIKHSTPCGAALGSSVLEAYNRTYECDPTSIFGGIVAFNSTVDEATAKELIKIFLEIVIAKDFTPEALEVLKTKKNLRVIKYKTNTNDKINLVKVDGGLLVQDEDTTLIEDYKVVTEKKPTEEEMKNLIFGIKVVKYAKSNAIVVIKDFMAKGIGSGQTNRIWACEDALERAGDGVVMASDAFFPFRDVVDACAKYNIKAIIQPGGSMRDQESIDACNEHGIAMIFTGIRHFKH.

The region spanning 1–145 (MIKRALISVF…KSFKDVVVIS (145 aa)) is the MGS-like domain.

The protein belongs to the PurH family.

It carries out the reaction (6R)-10-formyltetrahydrofolate + 5-amino-1-(5-phospho-beta-D-ribosyl)imidazole-4-carboxamide = 5-formamido-1-(5-phospho-D-ribosyl)imidazole-4-carboxamide + (6S)-5,6,7,8-tetrahydrofolate. The enzyme catalyses IMP + H2O = 5-formamido-1-(5-phospho-D-ribosyl)imidazole-4-carboxamide. The protein operates within purine metabolism; IMP biosynthesis via de novo pathway; 5-formamido-1-(5-phospho-D-ribosyl)imidazole-4-carboxamide from 5-amino-1-(5-phospho-D-ribosyl)imidazole-4-carboxamide (10-formyl THF route): step 1/1. Its pathway is purine metabolism; IMP biosynthesis via de novo pathway; IMP from 5-formamido-1-(5-phospho-D-ribosyl)imidazole-4-carboxamide: step 1/1. This chain is Bifunctional purine biosynthesis protein PurH, found in Brachyspira hyodysenteriae (strain ATCC 49526 / WA1).